A 360-amino-acid chain; its full sequence is Histidinol-phosphate aminotransferase (360 aa).

Lys221 carries the N6-(pyridoxal phosphate)lysine modification.

It belongs to the class-II pyridoxal-phosphate-dependent aminotransferase family. Histidinol-phosphate aminotransferase subfamily. Homodimer. It depends on pyridoxal 5'-phosphate as a cofactor.

It catalyses the reaction L-histidinol phosphate + 2-oxoglutarate = 3-(imidazol-4-yl)-2-oxopropyl phosphate + L-glutamate. The protein operates within amino-acid biosynthesis; L-histidine biosynthesis; L-histidine from 5-phospho-alpha-D-ribose 1-diphosphate: step 7/9. This Desulfitobacterium hafniense (strain Y51) protein is Histidinol-phosphate aminotransferase.